The chain runs to 505 residues: 2,3-bisphosphoglycerate-independent phosphoglycerate mutase (505 aa).

2 residues coordinate Mn(2+): aspartate 13 and serine 63. The active-site Phosphoserine intermediate is serine 63. Residues histidine 124, 153-154 (RD), arginine 183, arginine 189, 254-257 (RADR), and lysine 330 contribute to the substrate site. Mn(2+) is bound by residues aspartate 396, histidine 400, aspartate 437, histidine 438, and histidine 456.

It belongs to the BPG-independent phosphoglycerate mutase family. Monomer. It depends on Mn(2+) as a cofactor.

The catalysed reaction is (2R)-2-phosphoglycerate = (2R)-3-phosphoglycerate. It functions in the pathway carbohydrate degradation; glycolysis; pyruvate from D-glyceraldehyde 3-phosphate: step 3/5. Its function is as follows. Catalyzes the interconversion of 2-phosphoglycerate and 3-phosphoglycerate. The protein is 2,3-bisphosphoglycerate-independent phosphoglycerate mutase of Dinoroseobacter shibae (strain DSM 16493 / NCIMB 14021 / DFL 12).